Reading from the N-terminus, the 315-residue chain is MRLVFAGTPEPALPALRRLLDSPRHEMIAVLTRPDAASGRRGKPEPSPVAREALDRGIPVLRPARPNSPEFVAELAQLAPDCCAVVAYGALLRDELLAVPPHGWINLHFSLLPAWRGAAPVQAAIAAGDIITGASTFRIEPALDSGPIYGVVTEAIRPTDTAGELLARLAVSGAELLSATLDGIADSTLTPRPQPAEGVSIAPKITVEQARVRWDLPAPVVERRIRAVTPNPGAWTVISDLRIKLGPVRLGAASDLPAPPEPLPPGAIHVDRKSVWVGTGSDPVRLGQIQPPGKKFMNAVDWARGARLDPAARAT.

110–113 (SLLP) is a (6S)-5,6,7,8-tetrahydrofolate binding site.

The protein belongs to the Fmt family.

The enzyme catalyses L-methionyl-tRNA(fMet) + (6R)-10-formyltetrahydrofolate = N-formyl-L-methionyl-tRNA(fMet) + (6S)-5,6,7,8-tetrahydrofolate + H(+). Attaches a formyl group to the free amino group of methionyl-tRNA(fMet). The formyl group appears to play a dual role in the initiator identity of N-formylmethionyl-tRNA by promoting its recognition by IF2 and preventing the misappropriation of this tRNA by the elongation apparatus. This is Methionyl-tRNA formyltransferase from Mycolicibacterium paratuberculosis (strain ATCC BAA-968 / K-10) (Mycobacterium paratuberculosis).